The following is a 338-amino-acid chain: MNLKKFPRHVLTFGPTPIQPLKRLSAHLGGKVDLYAKREDCNSGLAFGGNKTRKLEYLIPEALEGGYDTLVSIGGIQSNQTRQVAAVAAHLGLKCVLVQENWVNYSDAVYDRVGNIEMSRIMGADVRLDAAGFDIGIRQSWEQAMADVRAAGGKPFPIPAGCSEHPRGGLGSVGFAEEVRQQEAELGFKFDYLVVCSVTGSTQAGMVVGFAADGRADRVIGIDASAKPQQTFEQILRIAKNTAELVELGRDITEKDVVLDRRFGGPEYGLPNEGTLEAIRLSARFEGMLTDPVYEGKSMHGMIEKVRLGEFPAGSKVLYAHLGGVPALNAYSFLFRNG.

The residue at position 51 (Lys51) is an N6-(pyridoxal phosphate)lysine. Catalysis depends on Ser78, which acts as the Nucleophile.

It belongs to the ACC deaminase/D-cysteine desulfhydrase family. As to quaternary structure, homotrimer. Pyridoxal 5'-phosphate serves as cofactor.

The catalysed reaction is 1-aminocyclopropane-1-carboxylate + H2O = 2-oxobutanoate + NH4(+). Its function is as follows. Catalyzes a cyclopropane ring-opening reaction, the irreversible conversion of 1-aminocyclopropane-1-carboxylate (ACC) to ammonia and alpha-ketobutyrate. Allows growth on ACC as a nitrogen source. The chain is 1-aminocyclopropane-1-carboxylate deaminase from Variovorax paradoxus.